The sequence spans 241 residues: Purine nucleoside phosphorylase DeoD-type 1 (241 aa).

Histidine 5 is an a purine D-ribonucleoside binding site. Phosphate-binding positions include glycine 21, arginine 25, arginine 44, and 88-91 (RVGS). A purine D-ribonucleoside is bound by residues 180-182 (EME) and 204-205 (SD). The Proton donor role is filled by aspartate 205.

This sequence belongs to the PNP/UDP phosphorylase family. Homohexamer; trimer of homodimers.

It carries out the reaction a purine D-ribonucleoside + phosphate = a purine nucleobase + alpha-D-ribose 1-phosphate. It catalyses the reaction a purine 2'-deoxy-D-ribonucleoside + phosphate = a purine nucleobase + 2-deoxy-alpha-D-ribose 1-phosphate. Functionally, catalyzes the reversible phosphorolytic breakdown of the N-glycosidic bond in the beta-(deoxy)ribonucleoside molecules, with the formation of the corresponding free purine bases and pentose-1-phosphate. This Photobacterium profundum (strain SS9) protein is Purine nucleoside phosphorylase DeoD-type 1.